The primary structure comprises 412 residues: Sexual development regulator umv3 (412 aa).

Residues 1 to 197 (MSAQDDIDTG…PPLLSDLPRH (197 aa)) form a disordered region. Composition is skewed to polar residues over residues 73-93 (RANT…SASS) and 149-170 (RQSA…PGST). Basic and acidic residues predominate over residues 171-181 (ENERVRMHDQR). The Velvet domain maps to 195–388 (PRHSTDNKTY…ARQGIQVPVR (194 aa)).

The protein belongs to the velvet family. VelC subfamily.

Its subcellular location is the nucleus. Its function is as follows. Velvet-domain-containing protein not required for disease or sexual development on seedlings. The protein is Sexual development regulator umv3 of Mycosarcoma maydis (Corn smut fungus).